Consider the following 199-residue polypeptide: GTP cyclohydrolase-2 (199 aa).

49–53 (RIHSE) contributes to the GTP binding site. The Zn(2+) site is built by C54, C65, and C67. GTP is bound by residues Q70, 92 to 94 (EGR), and T114. The Proton acceptor role is filled by D126. The active-site Nucleophile is R128. Positions 149 and 154 each coordinate GTP.

The protein belongs to the GTP cyclohydrolase II family. In terms of assembly, homodimer. Zn(2+) serves as cofactor.

It catalyses the reaction GTP + 4 H2O = 2,5-diamino-6-hydroxy-4-(5-phosphoribosylamino)-pyrimidine + formate + 2 phosphate + 3 H(+). It participates in cofactor biosynthesis; riboflavin biosynthesis; 5-amino-6-(D-ribitylamino)uracil from GTP: step 1/4. Functionally, catalyzes the conversion of GTP to 2,5-diamino-6-ribosylamino-4(3H)-pyrimidinone 5'-phosphate (DARP), formate and pyrophosphate. This is GTP cyclohydrolase-2 from Blochmanniella floridana.